Reading from the N-terminus, the 255-residue chain is DNA repair protein RecO (255 aa).

This sequence belongs to the RecO family.

In terms of biological role, involved in DNA repair and RecF pathway recombination. The sequence is that of DNA repair protein RecO from Listeria monocytogenes serotype 4b (strain CLIP80459).